A 2696-amino-acid chain; its full sequence is Protein ILITYHIA (2696 aa).

Residues 1-18 (MSYSMVNASSAVSSPETA) show a composition bias toward polar residues. A disordered region spans residues 1 to 26 (MSYSMVNASSAVSSPETAKNSDEPPP). 9 HEAT repeats span residues 162 to 204 (DIAP…MKTF), 253 to 290 (STQA…IYSL), 303 to 340 (KDSP…DVLN), 364 to 400 (EFQT…IDLS), 401 to 438 (KYAL…KSSN), 487 to 525 (SLSR…RSSV), 526 to 562 (AIQP…NPDT), 564 to 601 (SQIS…SKIA), and 642 to 677 (VVCV…FLLC). The interval 901 to 941 (KQEPSSNHSLKKGLASRETANSGRRDTAKLTKKADKGKTAK) is disordered. The span at 923 to 941 (GRRDTAKLTKKADKGKTAK) shows a compositional bias: basic and acidic residues. HEAT repeat units follow at residues 985–1021 (HSQL…CTVQ), 1082–1118 (DTFT…GLQA), 1188–1225 (HDLG…ESPS), 1273–1311 (KDLP…KHGK), 1315–1355 (SLLF…HLAR), 1358–1395 (PKVH…SKQE), 1397–1433 (APAL…GFGI), 1436–1474 (LKKY…KLGK), 1478–1515 (PYVI…QLSA), 1516–1553 (YGVK…CAPQ), 1564–1600 (PKLT…VIKN), 1601–1638 (PEIS…NSVD), 1640–1677 (PSLA…LVTE), 1683–1720 (PYIG…GMGE), 1722–1759 (NFPD…ALGT), 1761–1797 (YFEN…SLGA), 1801–1838 (KYLQ…HHAT), and 1840–1876 (SLPL…KVAG). The residue at position 1887 (serine 1887) is a Phosphoserine. HEAT repeat units lie at residues 1908-1945 (DKRN…NTPK), 1949-1986 (EIMP…KLGE), 1988-2024 (VLPL…SAGR), 2029-2066 (SFMD…SAGL), 2067-2102 (QAMD…VRTA), 2104-2137 (VLPH…AGFN), 2138-2175 (THLG…VIDE), 2177-2213 (GVET…SSKL), 2217-2254 (DEAP…SVPK), 2258-2292 (PSYI…LCLP), 2293-2330 (KSLK…VTSE), 2335-2373 (EFVI…RGGM), 2377-2414 (PFLP…LSTR), 2416-2450 (DPLV…HAGK), 2455-2492 (AVRV…YLEA), 2494-2530 (QLSV…HNPS), 2536-2573 (SLFS…KQLA), 2580-2617 (KVVI…DNPS), and 2620-2658 (MANI…LTKG).

It belongs to the GCN1 family.

Its function is as follows. Involved in immunity against bacterial infection and in non-host resistance. Required for embryo development. Required for systemic acquired resistance, but functions in an salicylic acid-independent manner. Required for bacterium-triggered stomatal closure response. The sequence is that of Protein ILITYHIA from Arabidopsis thaliana (Mouse-ear cress).